The chain runs to 130 residues: Small ribosomal subunit protein uS11 (130 aa).

Belongs to the universal ribosomal protein uS11 family. As to quaternary structure, part of the 30S ribosomal subunit. Interacts with proteins S7 and S18. Binds to IF-3.

Located on the platform of the 30S subunit, it bridges several disparate RNA helices of the 16S rRNA. Forms part of the Shine-Dalgarno cleft in the 70S ribosome. In Teredinibacter turnerae (strain ATCC 39867 / T7901), this protein is Small ribosomal subunit protein uS11.